A 121-amino-acid polypeptide reads, in one-letter code: Acid shock protein (121 aa).

The signal sequence occupies residues 1–21 (MKKVLALMVAATLGLSSVAFA). Positions 22–63 (ADTTATATPAATSTTATVAAQTKATQHQKHKVTKKTTEQKAQ) are excised as a propeptide. The disordered stretch occupies residues 40–121 (AAQTKATQHQ…AKKPVAAPAA (82 aa)). The span at 84–93 (AAKKHVKKAS) shows a compositional bias: basic residues. The segment covering 94-103 (VQKAPVQKAQ) has biased composition (low complexity). Residues 104–113 (AAKKHHKTAK) are compositionally biased toward basic residues.

The protein belongs to the Asr family. In terms of processing, proteolytic processing gives rise to the active protein.

It is found in the periplasm. In terms of biological role, required for growth and/or survival at acidic conditions. The protein is Acid shock protein of Yersinia pestis bv. Antiqua (strain Antiqua).